Consider the following 65-residue polypeptide: Muscarinic toxin 3 (65 aa).

4 disulfides stabilise this stretch: Cys3/Cys24, Cys17/Cys42, Cys46/Cys57, and Cys58/Cys63.

The protein belongs to the three-finger toxin family. Short-chain subfamily. Aminergic toxin sub-subfamily. As to expression, expressed by the venom gland.

The protein localises to the secreted. Potent antagonist (IC(50)=1-10 nM) of M4 (CHRM4) muscarinic receptors, and CHRM1, ADRA1A, ADRA2A and ADRA2C adrenergic receptors. Also antagonises ADRA1B and ADRA1D adrenergic receptors with a 10-times lower affinity. This is Muscarinic toxin 3 from Dendroaspis angusticeps (Eastern green mamba).